The chain runs to 529 residues: Nuclear protein localization protein 4 homolog 1 (529 aa).

The region spanning 129-266 is the MPN domain; it reads IQIENQELVN…ITEYSMDRHY (138 aa). Residues 499–529 form a RanBP2-type zinc finger; that stretch reads SGGAVWNCGHCTFQNEAARQDCSMCGLPAAD.

It belongs to the NPL4 family. As to quaternary structure, forms a complex composed of ubxn-3, ufd-1, npl-4.1 and cdc-48.1; within the complex, interacts with ufd-1 and ubxn-3. Interacts with ufd-1. Interacts with elc-1/elongin C; the interaction may mediate the interaction between the npl-4-ufd-1-cdc-48 complex and the E3 ubiquitin ligase cul-2 complex.

Its subcellular location is the cytoplasm. The protein localises to the nucleus. In terms of biological role, in association with ufd-1 and ATPase cdc-48.1 and/or cdc-48.2, involved in the cytoplasmic elimination of misfolded proteins exported from the ER. This pathway, known as ERAD, prevents the activation of the unfolded protein response (UPR) caused by the accumulation of misfolded proteins in the ER. During S phase and in association with ufd-1, cdc-48.1 and/or cdc-48.2 and ubxn-3, ensures the degradation of DNA licensing factor cdt-1 after the initiation of DNA replication and thus the disassembly of the DNA replication CGM helicase complex by promoting the dissociation from chromatin of several of its components including cdc-45 and sld-5. Regulates ubxn-3 nuclear localization during S phase. The polypeptide is Nuclear protein localization protein 4 homolog 1 (Caenorhabditis elegans).